The following is a 704-amino-acid chain: DNA ligase (704 aa).

Residues 43–47 (DADYD), 92–93 (SL), and Glu124 each bind NAD(+). The N6-AMP-lysine intermediate role is filled by Lys126. NAD(+) contacts are provided by Arg147, Glu182, Lys298, and Lys322. Cys427, Cys430, Cys445, and Cys451 together coordinate Zn(2+). The BRCT domain maps to 625–704 (PVASPVAGKI…DGWLRLIGDA (80 aa)).

It belongs to the NAD-dependent DNA ligase family. LigA subfamily. Requires Mg(2+) as cofactor. Mn(2+) is required as a cofactor.

The catalysed reaction is NAD(+) + (deoxyribonucleotide)n-3'-hydroxyl + 5'-phospho-(deoxyribonucleotide)m = (deoxyribonucleotide)n+m + AMP + beta-nicotinamide D-nucleotide.. In terms of biological role, DNA ligase that catalyzes the formation of phosphodiester linkages between 5'-phosphoryl and 3'-hydroxyl groups in double-stranded DNA using NAD as a coenzyme and as the energy source for the reaction. It is essential for DNA replication and repair of damaged DNA. The protein is DNA ligase of Cereibacter sphaeroides (strain ATCC 17023 / DSM 158 / JCM 6121 / CCUG 31486 / LMG 2827 / NBRC 12203 / NCIMB 8253 / ATH 2.4.1.) (Rhodobacter sphaeroides).